The primary structure comprises 407 residues: Imidazolonepropionase (407 aa).

The Fe(3+) site is built by His-75 and His-77. 2 residues coordinate Zn(2+): His-75 and His-77. Arg-84, Tyr-147, and His-180 together coordinate 4-imidazolone-5-propanoate. Residue Tyr-147 participates in N-formimidoyl-L-glutamate binding. Residue His-245 participates in Fe(3+) binding. His-245 is a Zn(2+) binding site. Gln-248 contributes to the 4-imidazolone-5-propanoate binding site. Asp-320 is a Fe(3+) binding site. Asp-320 serves as a coordination point for Zn(2+). Asn-322 and Gly-324 together coordinate N-formimidoyl-L-glutamate. Residue Ser-325 coordinates 4-imidazolone-5-propanoate.

The protein belongs to the metallo-dependent hydrolases superfamily. HutI family. Zn(2+) serves as cofactor. Fe(3+) is required as a cofactor.

Its subcellular location is the cytoplasm. The enzyme catalyses 4-imidazolone-5-propanoate + H2O = N-formimidoyl-L-glutamate. It functions in the pathway amino-acid degradation; L-histidine degradation into L-glutamate; N-formimidoyl-L-glutamate from L-histidine: step 3/3. In terms of biological role, catalyzes the hydrolytic cleavage of the carbon-nitrogen bond in imidazolone-5-propanoate to yield N-formimidoyl-L-glutamate. It is the third step in the universal histidine degradation pathway. The chain is Imidazolonepropionase from Pseudoalteromonas atlantica (strain T6c / ATCC BAA-1087).